The following is a 465-amino-acid chain: MALLIAWVCVAVSIEKALGGQGDGGDLYSENITRILDKLLDGYDNRLRPGFGGAVTEVKTDIYVTSFGPVSDVEMEYTMDVFFRQTWTDERLKFGGPTEILRLNNLMVSKIWTPDTFFRNGKKSIAHNMTTPNKLFRIMQNGTILYTMRLTINADCPMRLVNFPMDGHACPLKFGSYAYPKSEIIYTWKKGPLHSVEVPQESSSLLQYDLIGQTVSSETIKSNTGEYVIMTVYFHLQRKMGYFMIQIYTPCIMTVILSQVSFWINKESVPARTVFGITTVLTMTTLSISARHSLPKVSYATAMDWFIAVCFAFVFSALIEFAAVNYFTNLQTQRAMRKAARAAALAAALSAATVPAEDEIVSHSDSNCNLKKRVNSVTSQADQSPEASIVSNSASQCQPVSAPPPAPPAPPPVGGTSKIDQYSRILFPVAFAGFNLVYWVVYLSKDTMEFFEPTAMHLRNDHQSN.

Residues 1–19 (MALLIAWVCVAVSIEKALG) form the signal peptide. At 20–243 (GQGDGGDLYS…FHLQRKMGYF (224 aa)) the chain is on the extracellular side. A glycan (N-linked (GlcNAc...) asparagine) is linked at Asn31. 4-aminobutanoate is bound at residue Arg84. N-linked (GlcNAc...) asparagine glycans are attached at residues Asn128 and Asn141. Position 147 (Thr147) interacts with 4-aminobutanoate. Cys156 and Cys170 form a disulfide bridge. The chain crosses the membrane as a helical span at residues 244-264 (MIQIYTPCIMTVILSQVSFWI). Over 265 to 270 (NKESVP) the chain is Cytoplasmic. Residues 271–290 (ARTVFGITTVLTMTTLSISA) traverse the membrane as a helical segment. The Extracellular segment spans residues 291-304 (RHSLPKVSYATAMD). Residues 305–325 (WFIAVCFAFVFSALIEFAAVN) form a helical membrane-spanning segment. Residues 326-424 (YFTNLQTQRA…GTSKIDQYSR (99 aa)) are Cytoplasmic-facing. The segment at 392 to 415 (NSASQCQPVSAPPPAPPAPPPVGG) is disordered. A compositionally biased stretch (pro residues) spans 401–413 (SAPPPAPPAPPPV). The chain crosses the membrane as a helical span at residues 425–445 (ILFPVAFAGFNLVYWVVYLSK). Topologically, residues 446 to 465 (DTMEFFEPTAMHLRNDHQSN) are extracellular.

This sequence belongs to the ligand-gated ion channel (TC 1.A.9) family. Gamma-aminobutyric acid receptor (TC 1.A.9.5) subfamily. GABRA6 sub-subfamily. In terms of assembly, heteropentamer, formed by a combination of alpha (GABRA1-6), beta (GABRB1-3), gamma (GABRG1-3), delta (GABRD), epsilon (GABRE), rho (GABRR1-3), pi (GABRP) and theta (GABRQ) chains, each subunit exhibiting distinct physiological and pharmacological properties. In terms of tissue distribution, expressed in brain, in cerebellar granule cells.

It localises to the postsynaptic cell membrane. It is found in the cell membrane. It catalyses the reaction chloride(in) = chloride(out). Alpha subunit of the heteropentameric ligand-gated chloride channel gated by gamma-aminobutyric acid (GABA), a major inhibitory neurotransmitter in the brain. GABA-gated chloride channels, also named GABA(A) receptors (GABAAR), consist of five subunits arranged around a central pore and contain GABA active binding site(s) located at the alpha and beta subunit interface(s). When activated by GABA, GABAARs selectively allow the flow of chloride anions across the cell membrane down their electrochemical gradient. The polypeptide is Gamma-aminobutyric acid receptor subunit alpha-6 (GABRA6) (Gallus gallus (Chicken)).